A 633-amino-acid chain; its full sequence is Leucine-rich repeat and IQ domain-containing protein 3 (633 aa).

3 LRR repeats span residues S51–K72, K73–S94, and N98–S119. The LRRCT domain occupies C132–P179. Residues H215 to H244 form the IQ domain. The segment at S324 to E343 is disordered. Over residues K325–K336 the composition is skewed to basic residues. Residues I556–Y617 adopt a coiled-coil conformation.

The protein is Leucine-rich repeat and IQ domain-containing protein 3 (Lrriq3) of Mus musculus (Mouse).